Reading from the N-terminus, the 65-residue chain is Large ribosomal subunit protein bL35 (65 aa).

Residues 1-45 (MPKMKSHSGAKKRFKKTGNGKIKRKKANKGHLLTKKNAKRKRQLR) show a composition bias toward basic residues. Residues 1–65 (MPKMKSHSGA…RDRIKRMLST (65 aa)) form a disordered region. Residues 48–57 (VVVDDKANRD) are compositionally biased toward basic and acidic residues.

It belongs to the bacterial ribosomal protein bL35 family.

This Salinibacter ruber (strain DSM 13855 / M31) protein is Large ribosomal subunit protein bL35.